Here is a 149-residue protein sequence, read N- to C-terminus: Interleukin-2 (149 aa).

An N-terminal signal peptide occupies residues 1-20 (MYRMQLLSCIALTLAVLANS). The O-linked (GalNAc...) threonine glycan is linked to Thr-23. An intrachain disulfide couples Cys-78 to Cys-121. A glycan (N-linked (GlcNAc...) asparagine) is linked at Asn-106.

Belongs to the IL-2 family.

It is found in the secreted. In terms of biological role, cytokine produced by activated CD4-positive helper T-cells and to a lesser extend activated CD8-positive T-cells and natural killer (NK) cells that plays pivotal roles in the immune response and tolerance. Binds to a receptor complex composed of either the high-affinity trimeric IL-2R (IL2RA/CD25, IL2RB/CD122 and IL2RG/CD132) or the low-affinity dimeric IL-2R (IL2RB and IL2RG). Interaction with the receptor leads to oligomerization and conformation changes in the IL-2R subunits resulting in downstream signaling starting with phosphorylation of JAK1 and JAK3. In turn, JAK1 and JAK3 phosphorylate the receptor to form a docking site leading to the phosphorylation of several substrates including STAT5. This process leads to activation of several pathways including STAT, phosphoinositide-3-kinase/PI3K and mitogen-activated protein kinase/MAPK pathways. Functions as a T-cell growth factor and can increase NK-cell cytolytic activity as well. Promotes strong proliferation of activated B-cells and subsequently immunoglobulin production. Plays a pivotal role in regulating the adaptive immune system by controlling the survival and proliferation of regulatory T-cells, which are required for the maintenance of immune tolerance. Moreover, participates in the differentiation and homeostasis of effector T-cell subsets, including Th1, Th2, Th17 as well as memory CD8-positive T-cells. This is Interleukin-2 (IL2) from Equus caballus (Horse).